Consider the following 376-residue polypeptide: Phosphoserine aminotransferase (376 aa).

Residue Arg-42 participates in L-glutamate binding. Trp-104, Thr-163, Asp-188, and Gln-211 together coordinate pyridoxal 5'-phosphate. At Lys-212 the chain carries N6-(pyridoxal phosphate)lysine. A pyridoxal 5'-phosphate-binding site is contributed by 253 to 254 (NT).

It belongs to the class-V pyridoxal-phosphate-dependent aminotransferase family. SerC subfamily. As to quaternary structure, homodimer. Pyridoxal 5'-phosphate is required as a cofactor.

It localises to the cytoplasm. It catalyses the reaction O-phospho-L-serine + 2-oxoglutarate = 3-phosphooxypyruvate + L-glutamate. The enzyme catalyses 4-(phosphooxy)-L-threonine + 2-oxoglutarate = (R)-3-hydroxy-2-oxo-4-phosphooxybutanoate + L-glutamate. The protein operates within amino-acid biosynthesis; L-serine biosynthesis; L-serine from 3-phospho-D-glycerate: step 2/3. It functions in the pathway cofactor biosynthesis; pyridoxine 5'-phosphate biosynthesis; pyridoxine 5'-phosphate from D-erythrose 4-phosphate: step 3/5. Functionally, catalyzes the reversible conversion of 3-phosphohydroxypyruvate to phosphoserine and of 3-hydroxy-2-oxo-4-phosphonooxybutanoate to phosphohydroxythreonine. In Bordetella avium (strain 197N), this protein is Phosphoserine aminotransferase.